The primary structure comprises 158 residues: Cysteine-rich venom protein VAR7 (158 aa).

Residues 1-22 (MILLKLYLTLAAILCQSRGTTS) form the signal peptide. The region spanning 41-158 (NKHNDLRRTV…MGCAINLCPN (118 aa)) is the SCP domain. Cysteines 77 and 156 form a disulfide.

Belongs to the CRISP family. Contains 8 disulfide bonds. Expressed by the venom gland.

It is found in the secreted. Blocks ryanodine receptors, and potassium channels. This chain is Cysteine-rich venom protein VAR7, found in Varanus acanthurus (Ridge-tailed monitor).